Reading from the N-terminus, the 688-residue chain is Glycine--tRNA ligase beta subunit (688 aa).

This sequence belongs to the class-II aminoacyl-tRNA synthetase family. Tetramer of two alpha and two beta subunits.

The protein resides in the cytoplasm. The enzyme catalyses tRNA(Gly) + glycine + ATP = glycyl-tRNA(Gly) + AMP + diphosphate. The protein is Glycine--tRNA ligase beta subunit of Desulforudis audaxviator (strain MP104C).